Here is a 345-residue protein sequence, read N- to C-terminus: MSSIRLTQYSHGAGCGCKISPKVLDTILKSQIPGFDDPTLVVGNSSKDDAAVVDIGNGQGIVSTTDFFMPIVDDPFTFGRIAATNAISDIYAMGGKPIVAIAILGWPINTLAPEIAQQVIDGGRQVCHEAGISLAGGHSIDAPEPIFGLAVTGIVPLDAIKQNDTAQAGDILYLTKPLGIGILTTAQKKGKLKPEHEQLAPNAMCTLNKIGQRFAELPGVHAMTDVTGFGLAGHLLEMCEGSGVCATLDFKALPLLDEVDYYLSEGCVPGGTLRNFDSYGAKLGAMDERTRNIMCDPQTSGGLLVAVGKESEAELLAIATQAGLTLSPIGQLKAYTGNQFIEVIQ.

Cys15 is an active-site residue. ATP contacts are provided by residues Lys18 and 46–48 (SKD). A Mg(2+)-binding site is contributed by Asp49. Residues Asp66, Asp89, and 137 to 139 (GHS) each bind ATP. Asp89 serves as a coordination point for Mg(2+). Mg(2+) is bound at residue Asp225.

This sequence belongs to the selenophosphate synthase 1 family. Class I subfamily. Homodimer. Requires Mg(2+) as cofactor.

The enzyme catalyses hydrogenselenide + ATP + H2O = selenophosphate + AMP + phosphate + 2 H(+). In terms of biological role, synthesizes selenophosphate from selenide and ATP. The protein is Selenide, water dikinase of Aeromonas salmonicida (strain A449).